The primary structure comprises 126 residues: Aspartate 1-decarboxylase (126 aa).

Residue S25 is the Schiff-base intermediate with substrate; via pyruvic acid of the active site. Position 25 is a pyruvic acid (Ser) (S25). T57 provides a ligand contact to substrate. Y58 acts as the Proton donor in catalysis. A substrate-binding site is contributed by 73 to 75 (GGA).

It belongs to the PanD family. Heterooctamer of four alpha and four beta subunits. The cofactor is pyruvate. Is synthesized initially as an inactive proenzyme, which is activated by self-cleavage at a specific serine bond to produce a beta-subunit with a hydroxyl group at its C-terminus and an alpha-subunit with a pyruvoyl group at its N-terminus.

It is found in the cytoplasm. It catalyses the reaction L-aspartate + H(+) = beta-alanine + CO2. It participates in cofactor biosynthesis; (R)-pantothenate biosynthesis; beta-alanine from L-aspartate: step 1/1. Its function is as follows. Catalyzes the pyruvoyl-dependent decarboxylation of aspartate to produce beta-alanine. The sequence is that of Aspartate 1-decarboxylase from Acinetobacter baylyi (strain ATCC 33305 / BD413 / ADP1).